We begin with the raw amino-acid sequence, 83 residues long: Small ribosomal subunit protein bS16 (83 aa).

This sequence belongs to the bacterial ribosomal protein bS16 family.

In Azotobacter vinelandii (strain DJ / ATCC BAA-1303), this protein is Small ribosomal subunit protein bS16.